Here is a 503-residue protein sequence, read N- to C-terminus: Nuclear respiratory factor 1 (503 aa).

The segment at 1–78 (MEEHGVTQTE…AHLAAAGPVG (78 aa)) is dimerization. The interval 36–57 (SMLSADEDSPSSPEDTSYDDSD) is disordered. 5 positions are modified to phosphoserine; by CK2: S39, S44, S46, S47, and S52. Positions 88 to 116 (GKKRKRPHVFESNPSIRKRQQTRLLRKLR) match the Nuclear localization signal motif. A DNA-binding region spans residues 109–305 (TRLLRKLRAT…SIAHLVPSQT (197 aa)). K139 is covalently cross-linked (Glycyl lysine isopeptide (Lys-Gly) (interchain with G-Cter in SUMO2)). The tract at residues 301–476 (VPSQTVVQTF…AQGNGPVQVA (176 aa)) is required for transcriptional activation.

This sequence belongs to the NRF1/Ewg family. Homodimer. Binds DNA as a dimer. Interacts with PPRC1. Post-translationally, phosphorylation enhances DNA binding. In terms of tissue distribution, ubiquitously expressed with strongest expression in skeletal muscle.

The protein localises to the nucleus. Transcription factor that activates the expression of the EIF2S1 (EIF2-alpha) gene. Links the transcriptional modulation of key metabolic genes to cellular growth and development. Implicated in the control of nuclear genes required for respiration, heme biosynthesis, and mitochondrial DNA transcription and replication. The polypeptide is Nuclear respiratory factor 1 (NRF1) (Homo sapiens (Human)).